We begin with the raw amino-acid sequence, 865 residues long: Protein translocase subunit SecA (865 aa).

ATP-binding positions include Gln-93, Gly-111–Thr-115, and Asp-501. Residues Cys-841, Cys-843, Cys-852, and Cys-853 each coordinate Zn(2+).

The protein belongs to the SecA family. Monomer and homodimer. Part of the essential Sec protein translocation apparatus which comprises SecA, SecYEG and auxiliary proteins SecDF-YajC and YidC. Zn(2+) serves as cofactor.

The protein resides in the cell inner membrane. It is found in the cytoplasm. It carries out the reaction ATP + H2O + cellular proteinSide 1 = ADP + phosphate + cellular proteinSide 2.. Functionally, part of the Sec protein translocase complex. Interacts with the SecYEG preprotein conducting channel. Has a central role in coupling the hydrolysis of ATP to the transfer of proteins into and across the cell membrane, serving as an ATP-driven molecular motor driving the stepwise translocation of polypeptide chains across the membrane. This Helicobacter pylori (strain ATCC 700392 / 26695) (Campylobacter pylori) protein is Protein translocase subunit SecA.